A 300-amino-acid chain; its full sequence is Transcription initiation factor IIB (300 aa).

The segment at 3-34 (KQRVCPVCGSTEFIYDPERGEIVCARCGYVIE) adopts a TFIIB-type zinc-finger fold. Positions 7, 10, 26, and 29 each coordinate Zn(2+). Repeat copies occupy residues 114 to 197 (SELD…ARNL) and 210 to 291 (DYVN…ELVE).

This sequence belongs to the TFIIB family.

Its function is as follows. Stabilizes TBP binding to an archaeal box-A promoter. Also responsible for recruiting RNA polymerase II to the pre-initiation complex (DNA-TBP-TFIIB). The chain is Transcription initiation factor IIB from Pyrococcus abyssi (strain GE5 / Orsay).